A 529-amino-acid chain; its full sequence is Potassium voltage-gated channel subfamily A member 6 (529 aa).

A disordered region spans residues 1–33 (MRSEKSLTLAAPGEVRGPEGEQQDAGDFPEAGG). Residues 1–171 (MRSEKSLTLA…LLFEYPESSG (171 aa)) lie on the Cytoplasmic side of the membrane. Phosphoserine is present on S3. A helical transmembrane segment spans residues 172-193 (PARGIAIVSVLVILISIVIFCL). At 194-262 (ETLPQFRVDG…TLGGSFFTDP (69 aa)) the chain is on the extracellular side. Residues 210-220 (GVSRVSPVSRG) are compositionally biased toward low complexity. Residues 210–233 (GVSRVSPVSRGSQEEEEDEDDSYT) are disordered. Residues 263–284 (FFLVETLCIVWFTFELLVRFSA) traverse the membrane as a helical segment. A lipid anchor (S-palmitoyl cysteine) is attached at C285. Residues 285–295 (CPSKPAFFRNI) lie on the Cytoplasmic side of the membrane. The chain crosses the membrane as a helical span at residues 296 to 316 (MNIIDLVAIFPYFITLGTELV). Over 317 to 337 (QQQEQQPASGGGGQNGQQAMS) the chain is Extracellular. A helical; Voltage-sensor transmembrane segment spans residues 338–358 (LAILRVIRLVRVFRIFKLSRH). At 359-373 (SKGLQILGKTLQASM) the chain is on the cytoplasmic side. Residues 360–373 (KGLQILGKTLQASM) are S4-S5 linker. The helical transmembrane segment at 374–395 (RELGLLIFFLFIGVILFSSAVY) threads the bilayer. Topologically, residues 396–409 (FAEADDDDSLFPSI) are extracellular. Positions 410–421 (PDAFWWAVVTMT) form an intramembrane region, helical. The Selectivity filter signature appears at 422–427 (TVGYGD). An intramembrane segment occupies 422–429 (TVGYGDMY). At 430-436 (PMTVGGK) the chain is on the extracellular side. A helical transmembrane segment spans residues 437-465 (IVGSLCAIAGVLTIALPVPVIVSNFNYFY). The Cytoplasmic segment spans residues 466 to 529 (HRETEQEEQG…YAEKRMLTEV (64 aa)). Residues 488–513 (DLRATDNGLGKPDFPEANRERRPSYL) are disordered. Residues 500-510 (DFPEANRERRP) show a composition bias toward basic and acidic residues. S511 bears the Phosphoserine; by PKA mark. A PDZ-binding motif is present at residues 527–529 (TEV).

Belongs to the potassium channel family. A (Shaker) (TC 1.A.1.2) subfamily. Kv1.6/KCNA6 sub-subfamily. In terms of assembly, homotetramer and heterotetramer of potassium channel proteins. Interacts with KCNAB1 and KCNAB2.

Its subcellular location is the cell membrane. It carries out the reaction K(+)(in) = K(+)(out). In terms of biological role, voltage-gated potassium channel that mediates transmembrane potassium transport in excitable membranes. Forms tetrameric potassium-selective channels through which potassium ions pass in accordance with their electrochemical gradient. The channel alternates between opened and closed conformations in response to the voltage difference across the membrane. Can form functional homotetrameric channels and heterotetrameric channels that contain variable proportions of KCNA1, KCNA2, KCNA4, KCNA6, and possibly other family members as well; channel properties depend on the type of alpha subunits that are part of the channel. Channel properties are modulated by cytoplasmic beta subunits that regulate the subcellular location of the alpha subunits and promote rapid inactivation. Homotetrameric channels display rapid activation and slow inactivation. In Homo sapiens (Human), this protein is Potassium voltage-gated channel subfamily A member 6 (KCNA6).